The primary structure comprises 177 residues: Copper-binding regulatory protein cuf2 (177 aa).

Residues 1–40 (MIIIDGKNYACVVCLRGHRGSSCQHQERALIEVRTRGRPL) constitute a DNA-binding region (copper-fist). Residues Cys11, Cys14, Cys23, and His25 each contribute to the Zn(2+) site.

The protein localises to the nucleus. The polypeptide is Copper-binding regulatory protein cuf2 (cuf2) (Schizosaccharomyces pombe (strain 972 / ATCC 24843) (Fission yeast)).